The chain runs to 62 residues: MAFGIRRAYPTPIVKPLWPYAVGGVITFFLFAKAANASMNTEEFINDPRNPRFKAGGVKEEH.

The chain crosses the membrane as a helical span at residues 13–32 (IVKPLWPYAVGGVITFFLFA).

In terms of assembly, F-type ATP synthases have 2 components, the catalytic core F(1) and the membrane-embedded component F(0), linked together by a central stalk and a peripheral stalk. The central stalk, also called rotor shaft, is often seen as part of F(1). The peripheral stalk is seen as part of F(0). F(0) contains the membrane channel next to the rotor. F-type ATP synthases form dimers but each monomer functions independently in ATP generation. The dimer consists of 17 different polypeptides: ATP1 (subunit alpha, 3 molecules per monomer, part of F(1)), ATP2 (subunit beta, 3 copies per monomer, part of F(1)), ATP3 (subunit gamma, part of the central stalk), ATP4 (subunit b, part of the peripheral stalk), ATP5/OSCP (subunit 5/OSCP, part of the peripheral stalk), ATP6 (subunit a, part of the peripheral stalk), ATP7 (subunit d, part of the peripheral stalk), ATP8 (subunit 8, part of the peripheral stalk), OLI1 (subunit c, part of the rotor, 10 molecules per monomer), ATP14 (subunit h, part of the peripheral stalk), ATP15 (subunit epsilon, part of the central stalk), ATP16 (subunit delta, part of the central stalk), ATP17 (subunit f, part of the peripheral stalk), ATP18 (subunit i/j, part of the peripheral stalk), ATP19 (subunit k, dimer-specific, at interface between monomers), ATP20 (subunit g, at interface between monomers), TIM11 (subunit e, at interface between monomers).

The protein localises to the mitochondrion inner membrane. Functionally, mitochondrial membrane ATP synthase (F(1)F(0) ATP synthase or Complex V) produces ATP from ADP in the presence of a proton gradient across the membrane which is generated by electron transport complexes of the respiratory chain. F-type ATP synthases consist of two structural domains, F(1) - containing the extramembraneous catalytic core, and F(0) - containing the membrane proton channel, linked together by a central stalk and a peripheral stalk. During catalysis, ATP synthesis in the catalytic domain of F(1) is coupled via a rotary mechanism of the central stalk subunits to proton translocation. Part of the complex F(0) domain. Minor subunit located with subunit a/ATP6 in the membrane. This is ATP synthase subunit J, mitochondrial from Yarrowia lipolytica (strain CLIB 122 / E 150) (Yeast).